The following is a 502-amino-acid chain: Large ribosomal subunit protein uL2m (502 aa).

Residues 458 to 502 (AMNPVDHPHGGGEGRTKGGRPSVSPWGKPTKAGFRAGVGVGKRRI) form a disordered region. Residues 463-473 (DHPHGGGEGRT) are compositionally biased toward basic and acidic residues. The span at 493–502 (AGVGVGKRRI) shows a compositional bias: gly residues.

The protein belongs to the universal ribosomal protein uL2 family.

Its subcellular location is the mitochondrion. The sequence is that of Large ribosomal subunit protein uL2m (RPL2) from Oryza sativa (Rice).